A 233-amino-acid polypeptide reads, in one-letter code: Octanoyltransferase (233 aa).

Positions 36–211 (DTTPDEIWLV…EFTRQLGYPT (176 aa)) constitute a BPL/LPL catalytic domain. Residues 75-82 (RGGQVTYH), 142-144 (SLG), and 155-157 (GLA) each bind substrate. Catalysis depends on Cys173, which acts as the Acyl-thioester intermediate.

This sequence belongs to the LipB family.

It is found in the cytoplasm. It carries out the reaction octanoyl-[ACP] + L-lysyl-[protein] = N(6)-octanoyl-L-lysyl-[protein] + holo-[ACP] + H(+). The protein operates within protein modification; protein lipoylation via endogenous pathway; protein N(6)-(lipoyl)lysine from octanoyl-[acyl-carrier-protein]: step 1/2. In terms of biological role, catalyzes the transfer of endogenously produced octanoic acid from octanoyl-acyl-carrier-protein onto the lipoyl domains of lipoate-dependent enzymes. Lipoyl-ACP can also act as a substrate although octanoyl-ACP is likely to be the physiological substrate. The protein is Octanoyltransferase of Yersinia pseudotuberculosis serotype O:3 (strain YPIII).